The sequence spans 361 residues: Homer protein homolog 3 (361 aa).

The required for interaction with NFATC2 stretch occupies residues 1–80 (MSTAREQPIF…TKTSQKFGQW (80 aa)). In terms of domain architecture, WH1 spans 1–113 (MSTAREQPIF…EKFQEVKEAA (113 aa)). A disordered region spans residues 114-169 (RLAREKSQDGGELTSPALGLASHQVPPSPLVSANGPGEEKLFRSQSADAPGPTERE). Phosphoserine occurs at positions 120 and 159. Coiled coils occupy residues 191 to 243 (ALQD…SEVT) and 254 to 358 (GQSL…RLAE).

The protein belongs to the Homer family. Tetramer. Isoform 1 and isoform 2 encode coiled-coil structures that mediate homo- and heteromultimerization. Interacts with NFATC2; interaction is calcium independent; interaction competes with PPP3CA for NFATC2 binding; interaction is reduced by AKT activation. Interacts with NFATC1 and NFATC4. Interacts with SHANK1; forms a high-order complex at least composed of SHANK1 and HOMER3; the complex formation is regulated by CAMK2A-mediated phosphorylation.

Its subcellular location is the cytoplasm. It is found in the postsynaptic density. The protein resides in the synapse. Its function is as follows. Postsynaptic density scaffolding protein. Binds and cross-links cytoplasmic regions of GRM1, GRM5, ITPR1, DNM3, RYR1, RYR2, SHANK1 and SHANK3. By physically linking GRM1 and GRM5 with ER-associated ITPR1 receptors, it aids the coupling of surface receptors to intracellular calcium release. Isoforms can be differently regulated and may play an important role in maintaining the plasticity at glutamatergic synapses. Negatively regulates T cell activation by inhibiting the calcineurin-NFAT pathway. Acts by competing with calcineurin/PPP3CA for NFAT protein binding, hence preventing NFAT activation by PPP3CA. This is Homer protein homolog 3 from Homo sapiens (Human).